The following is a 356-amino-acid chain: MGLLRIMLPPKLQLLAVLVFGVAVLFLENQIQKLEESRGKLERAIARHEVREIEQRHTADGPRQEVALDEEDDVVIIYNRVPKTASTSFTNIAYDLCAKNRYHVLHINTTKNNPVMSLQDQVRFVKNVTSWKEMKPGFYHGHVSYLDFAKFGVKKKPIYINVIRDPIERLVSYYYFLRFGDDYRPGLRRRKQGDKKTFDECVAAGGSDCAPEKLWLQIPFFCGHSSECWNVGSRWALEQAKYNLINEYFLVGVTEELEDFIMLLEAALPRFFRGATELYRTGKKSHLRKTTEKKLPTKETIAKLQQSEIWKMENEFYEFALEQFQFVRAHAVREKDGELYILAQNFFYEKIYPKSN.

Residues 1-11 (MGLLRIMLPPK) lie on the Cytoplasmic side of the membrane. The chain crosses the membrane as a helical; Signal-anchor for type II membrane protein span at residues 12-28 (LQLLAVLVFGVAVLFLE). Positions 24 to 51 (VLFLENQIQKLEESRGKLERAIARHEVR) form a coiled coil. At 29–356 (NQIQKLEESR…FYEKIYPKSN (328 aa)) the chain is on the lumenal side. Residues Lys83, Thr84, Ala85, Ser86, Thr87, and Ser88 each coordinate adenosine 3',5'-bisphosphate. N-linked (GlcNAc...) asparagine glycans are attached at residues Asn108 and Asn127. Residues His140 and His142 contribute to the active site. Arg164 and Ser172 together coordinate adenosine 3',5'-bisphosphate. 2 cysteine pairs are disulfide-bonded: Cys201/Cys209 and Cys222/Cys228. Tyr279, Ser285, Thr290, and Lys293 together coordinate adenosine 3',5'-bisphosphate.

Belongs to the sulfotransferase 3 family. In terms of assembly, homotrimer. Expressed in heart, limb, head and trunk. At stages 20 and 24, it is expressed in the most regions of the first and second pharyngeal arche. In both wing and leg buds, it is detected at the overlying ectoderm and mesenchyme throughout stages 21, 23 and 24.

It is found in the golgi apparatus membrane. Its function is as follows. Catalyzes the transfer of a sulfo group from 3'-phospho-5'-adenylyl sulfate (PAPS) to the 2-OH position of iduronic acid (IdoA) or glucuronic acid (GlcA) within the heparan sulfate (HS) chain and participates in HS biosynthesis. In Gallus gallus (Chicken), this protein is Heparan sulfate 2-O-sulfotransferase 1.